We begin with the raw amino-acid sequence, 518 residues long: Membrane-bound lytic murein transglycosylase F (518 aa).

The N-terminal stretch at 1–21 (MKKLKINYLFIGILALLLAVA) is a signal peptide. Residues 22–269 (LWPSIPWFGK…RIEEKYLGHG (248 aa)) form a non-LT domain region. Positions 270 to 518 (DDFDYVDTRT…SRKGSEEKQN (249 aa)) are LT domain. Residue glutamate 314 is part of the active site.

The protein in the N-terminal section; belongs to the bacterial solute-binding protein 3 family. In the C-terminal section; belongs to the transglycosylase Slt family.

Its subcellular location is the cell outer membrane. The enzyme catalyses Exolytic cleavage of the (1-&gt;4)-beta-glycosidic linkage between N-acetylmuramic acid (MurNAc) and N-acetylglucosamine (GlcNAc) residues in peptidoglycan, from either the reducing or the non-reducing ends of the peptidoglycan chains, with concomitant formation of a 1,6-anhydrobond in the MurNAc residue.. Murein-degrading enzyme that degrades murein glycan strands and insoluble, high-molecular weight murein sacculi, with the concomitant formation of a 1,6-anhydromuramoyl product. Lytic transglycosylases (LTs) play an integral role in the metabolism of the peptidoglycan (PG) sacculus. Their lytic action creates space within the PG sacculus to allow for its expansion as well as for the insertion of various structures such as secretion systems and flagella. In Escherichia coli (strain SMS-3-5 / SECEC), this protein is Membrane-bound lytic murein transglycosylase F.